The primary structure comprises 393 residues: S-adenosylmethionine synthase 2 (393 aa).

Glu9 is a binding site for Mg(2+). Residue His15 coordinates ATP. Position 43 (Glu43) interacts with K(+). The L-methionine site is built by Glu56 and Gln99. ATP is bound by residues Asp167–Lys169, Ser235–Phe238, Asp246, Arg252–Lys253, Ala269, Lys273, and Lys277. Asp246 is a binding site for L-methionine. Residue Lys277 participates in L-methionine binding.

The protein belongs to the AdoMet synthase family. Homotetramer. The cofactor is Mn(2+). Requires Mg(2+) as cofactor. Co(2+) is required as a cofactor. It depends on K(+) as a cofactor.

It is found in the cytoplasm. The catalysed reaction is L-methionine + ATP + H2O = S-adenosyl-L-methionine + phosphate + diphosphate. The protein operates within amino-acid biosynthesis; S-adenosyl-L-methionine biosynthesis; S-adenosyl-L-methionine from L-methionine: step 1/1. Functionally, catalyzes the formation of S-adenosylmethionine from methionine and ATP. The reaction comprises two steps that are both catalyzed by the same enzyme: formation of S-adenosylmethionine (AdoMet) and triphosphate, and subsequent hydrolysis of the triphosphate. In Elaeagnus umbellata (Autumn olive), this protein is S-adenosylmethionine synthase 2 (SAMS2).